A 1017-amino-acid polypeptide reads, in one-letter code: Type VI secretion system spike protein VgrG3 (1017 aa).

D842 is an active-site residue.

This sequence belongs to the VgrG protein family. In terms of assembly, interacts with TsiV3. Interacts with TseL.

It is found in the secreted. Part of the type VI secretion system specialized secretion system, which delivers several virulence factors in both prokaryotic and eukaryotic cells during infection. Forms the spike at the tip of the elongating tube formed by haemolysin co-regulated protein Hcp. Allows the delivery of the TseL antibacterial toxin to target cells where it exerts its toxicity. Additionally, acts directly as an effector and targets the cell wall peptidoglycan layer of prey cells for degradation via its C-terminus. Toxicity is counteracted by a cognate immunity protein TsiV3. The sequence is that of Type VI secretion system spike protein VgrG3 from Vibrio cholerae serotype O1 (strain ATCC 39315 / El Tor Inaba N16961).